An 89-amino-acid polypeptide reads, in one-letter code: Small ribosomal subunit protein uS19 (89 aa).

The protein belongs to the universal ribosomal protein uS19 family.

In terms of biological role, protein S19 forms a complex with S13 that binds strongly to the 16S ribosomal RNA. This chain is Small ribosomal subunit protein uS19, found in Xylella fastidiosa (strain M12).